The chain runs to 573 residues: MLGSLGLWALLPTAVEAPPNRRTCVFFEAPGVRGSTKTLGELLDTGTELPRAIRCLYSRCCFGIWNLTQDRAQVEMQGCRDSDEPGCESLHCDPSPRAHPSPGSTLFTCSCGTDFCNANYSHLPPPGSPGTPGSQGPQAAPGESIWMALVLLGLFLLLLLLLGSIILALLQRKNYRVRGEPVPEPRPDSGRDWSVELQELPELCFSQVIREGGHAVVWAGQLQGKLVAIKAFPPRSVAQFQAERALYELPGLQHDHIVRFITASRGGPGRLLSGPLLVLELHPKGSLCHYLTQYTSDWGSSLRMALSLAQGLAFLHEERWQNGQYKPGIAHRDLSSQNVLIREDGSCAIGDLGLALVLPGLTQPPAWTPTQPQGPAAIMEAGTQRYMAPELLDKTLDLQDWGMALRRADIYSLALLLWEILSRCPDLRPDSSPPPFQLAYEAELGNTPTSDELWALAVQERRRPYIPSTWRCFATDPDGLRELLEDCWDADPEARLTAECVQQRLAALAHPQESHPFPESCPRGCPPLCPEDCTSIPAPTILPCRPQRSACHFSVQQGPCSRNPQPACTLSPV.

An N-terminal signal peptide occupies residues 1–17 (MLGSLGLWALLPTAVEA). Topologically, residues 18 to 149 (PPNRRTCVFF…APGESIWMAL (132 aa)) are extracellular. Disulfide bonds link C55-C79 and C92-C109. A glycan (N-linked (GlcNAc...) asparagine) is linked at N66. N-linked (GlcNAc...) asparagine glycosylation is present at N119. The helical transmembrane segment at 150-170 (VLLGLFLLLLLLLGSIILALL) threads the bilayer. Over 171-573 (QRKNYRVRGE…PQPACTLSPV (403 aa)) the chain is Cytoplasmic. In terms of domain architecture, Protein kinase spans 203 to 518 (LCFSQVIREG…AHPQESHPFP (316 aa)). ATP contacts are provided by residues 209–217 (IREGGHAVV) and K230. D333 functions as the Proton acceptor in the catalytic mechanism.

This sequence belongs to the protein kinase superfamily. TKL Ser/Thr protein kinase family. TGFB receptor subfamily. Interacts with type I receptor ACVR1. Mg(2+) is required as a cofactor. Requires Mn(2+) as cofactor.

It is found in the membrane. It carries out the reaction L-threonyl-[receptor-protein] + ATP = O-phospho-L-threonyl-[receptor-protein] + ADP + H(+). The enzyme catalyses L-seryl-[receptor-protein] + ATP = O-phospho-L-seryl-[receptor-protein] + ADP + H(+). In terms of biological role, on ligand binding, forms a receptor complex consisting of two type II and two type I transmembrane serine/threonine kinases. Type II receptors phosphorylate and activate type I receptors which autophosphorylate, then bind and activate SMAD transcriptional regulators. Receptor for anti-Muellerian hormone. The polypeptide is Anti-Muellerian hormone type-2 receptor (AMHR2) (Homo sapiens (Human)).